A 1217-amino-acid chain; its full sequence is ATP-dependent helicase/nuclease subunit A (1217 aa).

Residues 10 to 475 (VIWTDAQWQS…IDLSQNFRSR (466 aa)) form the UvrD-like helicase ATP-binding domain. 31–38 (AAAGSGKT) lines the ATP pocket. The UvrD-like helicase C-terminal domain occupies 476–786 (KEVLSTTNYI…RMMTIHSSKG (311 aa)).

Belongs to the helicase family. AddA subfamily. As to quaternary structure, heterodimer of AddA and AddB/RexB. It depends on Mg(2+) as a cofactor.

It catalyses the reaction Couples ATP hydrolysis with the unwinding of duplex DNA by translocating in the 3'-5' direction.. It carries out the reaction ATP + H2O = ADP + phosphate + H(+). In terms of biological role, the heterodimer acts as both an ATP-dependent DNA helicase and an ATP-dependent, dual-direction single-stranded exonuclease. Recognizes the chi site generating a DNA molecule suitable for the initiation of homologous recombination. The AddA nuclease domain is required for chi fragment generation; this subunit has the helicase and 3' -&gt; 5' nuclease activities. This is ATP-dependent helicase/nuclease subunit A from Staphylococcus aureus (strain MRSA252).